We begin with the raw amino-acid sequence, 675 residues long: DNA gyrase subunit B (675 aa).

In terms of domain architecture, Toprim spans S453–P567. Residues E459, D532, and D534 each contribute to the Mg(2+) site.

This sequence belongs to the type II topoisomerase GyrB family. As to quaternary structure, heterotetramer, composed of two GyrA and two GyrB chains. In the heterotetramer, GyrA contains the active site tyrosine that forms a transient covalent intermediate with DNA, while GyrB binds cofactors and catalyzes ATP hydrolysis. It depends on Mg(2+) as a cofactor. Mn(2+) serves as cofactor. Requires Ca(2+) as cofactor.

The protein resides in the cytoplasm. It catalyses the reaction ATP-dependent breakage, passage and rejoining of double-stranded DNA.. With respect to regulation, inhibited by 4-quinoline drugs (nalidixic acid, ciprofloxacin, ofloxacin), although it is much less sensitive than the corresponding enzyme from E.coli. GyrB intrinsic ATPase activity inhibited by aminopyrazinamide and pyrrolamide derivatives. Its function is as follows. A type II topoisomerase that negatively supercoils closed circular double-stranded (ds) DNA in an ATP-dependent manner to modulate DNA topology and maintain chromosomes in an underwound state. Negative supercoiling favors strand separation, and DNA replication, transcription, recombination and repair, all of which involve strand separation. Also able to catalyze the interconversion of other topological isomers of dsDNA rings, including catenanes and knotted rings. Type II topoisomerases break and join 2 DNA strands simultaneously in an ATP-dependent manner. This chain is DNA gyrase subunit B, found in Mycolicibacterium smegmatis (strain ATCC 700084 / mc(2)155) (Mycobacterium smegmatis).